Reading from the N-terminus, the 230-residue chain is Protein GrpE (230 aa).

2 disordered regions span residues 1–26 (MADE…DREA) and 209–230 (GVSK…EDNA). Polar residues predominate over residues 221-230 (NGASTSEDNA).

The protein belongs to the GrpE family. In terms of assembly, homodimer.

Its subcellular location is the cytoplasm. Participates actively in the response to hyperosmotic and heat shock by preventing the aggregation of stress-denatured proteins, in association with DnaK and GrpE. It is the nucleotide exchange factor for DnaK and may function as a thermosensor. Unfolded proteins bind initially to DnaJ; upon interaction with the DnaJ-bound protein, DnaK hydrolyzes its bound ATP, resulting in the formation of a stable complex. GrpE releases ADP from DnaK; ATP binding to DnaK triggers the release of the substrate protein, thus completing the reaction cycle. Several rounds of ATP-dependent interactions between DnaJ, DnaK and GrpE are required for fully efficient folding. The sequence is that of Protein GrpE from Brucella suis biovar 1 (strain 1330).